The chain runs to 418 residues: Putative F-box protein At1g20795 (418 aa).

The F-box domain maps to 1 to 46; that stretch reads METLGLPLPLFEKILFRLDPISLVMMKCTRRSFNSHISEDPYFKSK.

The sequence is that of Putative F-box protein At1g20795 from Arabidopsis thaliana (Mouse-ear cress).